The chain runs to 311 residues: Probable cobalamin biosynthesis protein CobD (311 aa).

4 consecutive transmembrane segments (helical) span residues 53-73 (FIFG…AIYG), 76-96 (ILIN…FLIS), 157-177 (DSII…AFIY), and 288-308 (FSID…YVIF).

Belongs to the CobD/CbiB family.

The protein resides in the cell membrane. It functions in the pathway cofactor biosynthesis; adenosylcobalamin biosynthesis. Converts cobyric acid to cobinamide by the addition of aminopropanol on the F carboxylic group. The polypeptide is Probable cobalamin biosynthesis protein CobD (Methanococcus aeolicus (strain ATCC BAA-1280 / DSM 17508 / OCM 812 / Nankai-3)).